A 392-amino-acid polypeptide reads, in one-letter code: Chaperone protein DnaJ (392 aa).

Residues 2–67 form the J domain; the sequence is DYYTILGVAK…QKRESYDRYG (66 aa). The CR-type zinc-finger motif lies at 149–227; it reads GVEKELLVSG…CRGQGRIKDK (79 aa). Positions 162, 165, 179, 182, 201, 204, 215, and 218 each coordinate Zn(2+). CXXCXGXG motif repeat units follow at residues 162–169, 179–186, 201–208, and 215–222; these read CDACSGSG, CDRCKGSG, CPDCSGEG, and CSVCRGQG.

The protein belongs to the DnaJ family. As to quaternary structure, homodimer. Zn(2+) serves as cofactor.

The protein localises to the cytoplasm. Participates actively in the response to hyperosmotic and heat shock by preventing the aggregation of stress-denatured proteins and by disaggregating proteins, also in an autonomous, DnaK-independent fashion. Unfolded proteins bind initially to DnaJ; upon interaction with the DnaJ-bound protein, DnaK hydrolyzes its bound ATP, resulting in the formation of a stable complex. GrpE releases ADP from DnaK; ATP binding to DnaK triggers the release of the substrate protein, thus completing the reaction cycle. Several rounds of ATP-dependent interactions between DnaJ, DnaK and GrpE are required for fully efficient folding. Also involved, together with DnaK and GrpE, in the DNA replication of plasmids through activation of initiation proteins. The sequence is that of Chaperone protein DnaJ from Chlamydia trachomatis serovar L2 (strain ATCC VR-902B / DSM 19102 / 434/Bu).